The chain runs to 475 residues: Ribulose bisphosphate carboxylase large chain (475 aa).

The propeptide occupies 1–2 (MS). An N-acetylproline modification is found at Pro-3. An N6,N6,N6-trimethyllysine modification is found at Lys-14. 2 residues coordinate substrate: Asn-123 and Thr-173. Lys-175 serves as the catalytic Proton acceptor. A substrate-binding site is contributed by Lys-177. Mg(2+) is bound by residues Lys-201, Asp-203, and Glu-204. Lys-201 carries the N6-carboxylysine modification. The Proton acceptor role is filled by His-294. The substrate site is built by Arg-295, His-327, and Ser-379.

This sequence belongs to the RuBisCO large chain family. Type I subfamily. In terms of assembly, heterohexadecamer of 8 large chains and 8 small chains; disulfide-linked. The disulfide link is formed within the large subunit homodimers. The cofactor is Mg(2+). Post-translationally, the disulfide bond which can form in the large chain dimeric partners within the hexadecamer appears to be associated with oxidative stress and protein turnover.

Its subcellular location is the plastid. The protein localises to the chloroplast. The catalysed reaction is 2 (2R)-3-phosphoglycerate + 2 H(+) = D-ribulose 1,5-bisphosphate + CO2 + H2O. It catalyses the reaction D-ribulose 1,5-bisphosphate + O2 = 2-phosphoglycolate + (2R)-3-phosphoglycerate + 2 H(+). RuBisCO catalyzes two reactions: the carboxylation of D-ribulose 1,5-bisphosphate, the primary event in carbon dioxide fixation, as well as the oxidative fragmentation of the pentose substrate in the photorespiration process. Both reactions occur simultaneously and in competition at the same active site. This is Ribulose bisphosphate carboxylase large chain from Stellaria media (Common chickweed).